A 333-amino-acid chain; its full sequence is Complement C1q and tumor necrosis factor-related protein 9B (333 aa).

The first 19 residues, Met-1–Ser-19, serve as a signal peptide directing secretion. Collagen-like domains lie at Arg-24–Val-82, Gly-95–Met-154, and Gly-155–Gly-191. The tract at residues Arg-24 to Glu-189 is disordered. The segment covering Gly-26–Pro-40 has biased composition (low complexity). 2 stretches are compositionally biased toward basic and acidic residues: residues Arg-42–Ala-55 and Thr-69–Lys-88. Residues Leu-197 to Gln-333 form the C1q domain.

In terms of assembly, interacts with CTRP9A and ADIPOQ. Forms heterotrimers and heterooligomeric complexes with CTRP9A. In terms of tissue distribution, expressed at low levels. Not expressed in adipose tissues.

Its subcellular location is the secreted. Functionally, probable adipokine. Activates AMPK, AKT, and p44/42 MAPK signaling pathways. This chain is Complement C1q and tumor necrosis factor-related protein 9B (C1QTNF9B), found in Homo sapiens (Human).